A 297-amino-acid chain; its full sequence is Coatomer subunit epsilon-2 (297 aa).

It belongs to the COPE family. As to quaternary structure, oligomeric complex that consists of at least the alpha, beta, beta', gamma, delta, epsilon and zeta subunits.

Its subcellular location is the cytoplasm. The protein resides in the golgi apparatus membrane. The protein localises to the cytoplasmic vesicle. It localises to the COPI-coated vesicle membrane. In terms of biological role, the coatomer is a cytosolic protein complex that binds to dilysine motifs and reversibly associates with Golgi non-clathrin-coated vesicles, which further mediate biosynthetic protein transport from the ER, via the Golgi up to the trans Golgi network. The coatomer complex is required for budding from Golgi membranes, and is essential for the retrograde Golgi-to-ER transport of dilysine-tagged proteins. In Oryza sativa subsp. japonica (Rice), this protein is Coatomer subunit epsilon-2.